Reading from the N-terminus, the 247-residue chain is tRNA pseudouridine synthase A (247 aa).

The active-site Nucleophile is aspartate 52. Tyrosine 113 is a binding site for substrate.

Belongs to the tRNA pseudouridine synthase TruA family. As to quaternary structure, homodimer.

The enzyme catalyses uridine(38/39/40) in tRNA = pseudouridine(38/39/40) in tRNA. Its function is as follows. Formation of pseudouridine at positions 38, 39 and 40 in the anticodon stem and loop of transfer RNAs. This is tRNA pseudouridine synthase A from Bartonella bacilliformis (strain ATCC 35685 / KC583 / Herrer 020/F12,63).